The following is a 263-amino-acid chain: Phosphatidylserine decarboxylase proenzyme (263 aa).

Active-site charge relay system; for autoendoproteolytic cleavage activity residues include aspartate 90, histidine 146, and serine 230. Serine 230 (schiff-base intermediate with substrate; via pyruvic acid; for decarboxylase activity) is an active-site residue. Serine 230 bears the Pyruvic acid (Ser); by autocatalysis mark.

This sequence belongs to the phosphatidylserine decarboxylase family. PSD-B subfamily. Prokaryotic type I sub-subfamily. As to quaternary structure, heterodimer of a large membrane-associated beta subunit and a small pyruvoyl-containing alpha subunit. Pyruvate is required as a cofactor. In terms of processing, is synthesized initially as an inactive proenzyme. Formation of the active enzyme involves a self-maturation process in which the active site pyruvoyl group is generated from an internal serine residue via an autocatalytic post-translational modification. Two non-identical subunits are generated from the proenzyme in this reaction, and the pyruvate is formed at the N-terminus of the alpha chain, which is derived from the carboxyl end of the proenzyme. The autoendoproteolytic cleavage occurs by a canonical serine protease mechanism, in which the side chain hydroxyl group of the serine supplies its oxygen atom to form the C-terminus of the beta chain, while the remainder of the serine residue undergoes an oxidative deamination to produce ammonia and the pyruvoyl prosthetic group on the alpha chain. During this reaction, the Ser that is part of the protease active site of the proenzyme becomes the pyruvoyl prosthetic group, which constitutes an essential element of the active site of the mature decarboxylase.

Its subcellular location is the cell membrane. The catalysed reaction is a 1,2-diacyl-sn-glycero-3-phospho-L-serine + H(+) = a 1,2-diacyl-sn-glycero-3-phosphoethanolamine + CO2. It participates in phospholipid metabolism; phosphatidylethanolamine biosynthesis; phosphatidylethanolamine from CDP-diacylglycerol: step 2/2. Functionally, catalyzes the formation of phosphatidylethanolamine (PtdEtn) from phosphatidylserine (PtdSer). In Bacillus subtilis (strain 168), this protein is Phosphatidylserine decarboxylase proenzyme.